The chain runs to 355 residues: Fructose-1,6-bisphosphatase class 1 (355 aa).

Glu-90, Asp-109, Leu-111, and Asp-112 together coordinate Mg(2+). Residues 112–115, Asn-204, and 256–258 each bind substrate; these read DGSS and YLY. Position 276 (Glu-276) interacts with Mg(2+).

The protein belongs to the FBPase class 1 family. Homotetramer. Requires Mg(2+) as cofactor.

It is found in the cytoplasm. It catalyses the reaction beta-D-fructose 1,6-bisphosphate + H2O = beta-D-fructose 6-phosphate + phosphate. It functions in the pathway carbohydrate biosynthesis; gluconeogenesis. In Acidiphilium cryptum (strain JF-5), this protein is Fructose-1,6-bisphosphatase class 1.